Reading from the N-terminus, the 299-residue chain is Light-independent protochlorophyllide reductase iron-sulfur ATP-binding protein (299 aa).

The tract at residues M1–H23 is disordered. ATP contacts are provided by residues G43 to T48 and K72. Residue S47 participates in Mg(2+) binding. Residues C128 and C162 each contribute to the [4Fe-4S] cluster site. ATP contacts are provided by residues N213 to R214 and P237 to L239.

It belongs to the NifH/BchL/ChlL family. Homodimer. Protochlorophyllide reductase is composed of three subunits; BchL, BchN and BchB. [4Fe-4S] cluster is required as a cofactor.

The catalysed reaction is chlorophyllide a + oxidized 2[4Fe-4S]-[ferredoxin] + 2 ADP + 2 phosphate = protochlorophyllide a + reduced 2[4Fe-4S]-[ferredoxin] + 2 ATP + 2 H2O. It participates in porphyrin-containing compound metabolism; bacteriochlorophyll biosynthesis (light-independent). Component of the dark-operative protochlorophyllide reductase (DPOR) that uses Mg-ATP and reduced ferredoxin to reduce ring D of protochlorophyllide (Pchlide) to form chlorophyllide a (Chlide). This reaction is light-independent. The L component serves as a unique electron donor to the NB-component of the complex, and binds Mg-ATP. This is Light-independent protochlorophyllide reductase iron-sulfur ATP-binding protein from Roseobacter denitrificans (strain ATCC 33942 / OCh 114) (Erythrobacter sp. (strain OCh 114)).